Reading from the N-terminus, the 376-residue chain is Arsenite methyltransferase (376 aa).

Residues Ser47 and Ser336 each carry the phosphoserine modification. Over residues 354–363 the composition is skewed to basic and acidic residues; the sequence is SDKMKPRHAP. The interval 354 to 376 is disordered; it reads SDKMKPRHAPEGTGGCCGKRKNC.

Belongs to the methyltransferase superfamily. Arsenite methyltransferase family.

It localises to the cytoplasm. It is found in the cytosol. The catalysed reaction is arsenic triglutathione + [thioredoxin]-dithiol + S-adenosyl-L-methionine + 2 H2O = methylarsonous acid + [thioredoxin]-disulfide + 3 glutathione + S-adenosyl-L-homocysteine + H(+). It catalyses the reaction arsenic triglutathione + 2 [thioredoxin]-dithiol + 2 S-adenosyl-L-methionine + H2O = dimethylarsinous acid + 2 [thioredoxin]-disulfide + 3 glutathione + 2 S-adenosyl-L-homocysteine + 2 H(+). The enzyme catalyses arsenic triglutathione + 3 [thioredoxin]-dithiol + 3 S-adenosyl-L-methionine = trimethylarsine + 3 [thioredoxin]-disulfide + 3 glutathione + 3 S-adenosyl-L-homocysteine + 3 H(+). Catalyzes the transfer of a methyl group from AdoMet to trivalent arsenicals producing methylated and dimethylated arsenicals. It methylates arsenite to form methylarsonate, Me-AsO(3)H(2), which is reduced by methylarsonate reductase to methylarsonite, Me-As(OH)2. Methylarsonite is also a substrate and it is converted into the much less toxic compound dimethylarsinate (cacodylate), Me(2)As(O)-OH. The sequence is that of Arsenite methyltransferase (As3mt) from Mus musculus (Mouse).